The primary structure comprises 1257 residues: LIM domain kinase 1 (1257 aa).

The tract at residues 1 to 24 is disordered; the sequence is MHHQQRLRANGGRGGTGLGAGSGP. The tract at residues 1–147 is interaction with LATS1; the sequence is MHHQQRLRAN…ERSKLYCGQC (147 aa). Residues 11 to 24 show a composition bias toward gly residues; that stretch reads GGRGGTGLGAGSGP. LIM zinc-binding domains follow at residues 31–93 and 94–154; these read PLCA…RFGD and ACQQ…RSCQ. One can recognise a PDZ domain in the interval 174-274; it reads LVEIPKDATP…MLQLTVEHDP (101 aa). The Protein kinase domain occupies 401-686; sequence LVIGEKLGEG…PCFETLHVWL (286 aa). ATP-binding positions include 407–415 and K430; that span reads LGEGFFGKV. Residue D522 is part of the active site. Disordered stretches follow at residues 552 to 587, 759 to 811, and 881 to 900; these read LPSGNMTPGGYGSGANSDAPMSPSGTLRRSKSRQRR, QDIP…ERAL, and EELLEESTNKPSNQESQHHR. Positions 794 to 811 are enriched in basic and acidic residues; the sequence is QEERRNLTPDTESKERAL. S1000 bears the Phosphoserine mark. Disordered stretches follow at residues 1010 to 1037, 1085 to 1182, and 1212 to 1257; these read AKQLATPAPKRSKATATTKGGQSSNPPL, SAQQ…EKVH, and AAGT…NTRC. Composition is skewed to polar residues over residues 1085-1095 and 1113-1125; these read SAQQQRTSSNH and RTGSQGIPASNCV. Composition is skewed to low complexity over residues 1126-1137 and 1145-1166; these read SPTRSSRPGSPT and TAATAQRLTNAAATHQQQHQQQ.

It belongs to the protein kinase superfamily. TKL Ser/Thr protein kinase family. In terms of assembly, interacts with LATS1, and this interaction inhibits phosphorylation of tsr/cofilin. In terms of processing, phosphorylated on serine and/or threonine residues by ROCK1. Phosphorylated by PAK4 resulting in increased LIMK1 ability to phosphorylate cofilin. May be dephosphorylated and inactivated by SSH1. Expressed throughout the imaginal disks of the eye, leg and wing.

It localises to the cytoplasm. It is found in the cleavage furrow. The protein localises to the midbody. The catalysed reaction is L-seryl-[protein] + ATP = O-phospho-L-seryl-[protein] + ADP + H(+). The enzyme catalyses L-threonyl-[protein] + ATP = O-phospho-L-threonyl-[protein] + ADP + H(+). Protein kinase which regulates actin filament dynamics. Phosphorylates and inactivates the actin binding/depolymerizing factor tsr/cofilin, thereby stabilizing the actin cytoskeleton. Modulation of actin cytoskeleton dynamics may be essential for imaginal disk morphogenesis and axon guidance. The protein is LIM domain kinase 1 (LIMK1) of Drosophila melanogaster (Fruit fly).